We begin with the raw amino-acid sequence, 201 residues long: NF-kappa-B inhibitor-interacting Ras-like protein (201 aa).

Residues 3–201 (NAKIGKVGKV…VMQNRQKSEA (199 aa)) form a small GTPase-like region. 16-23 (GMKGVGKT) serves as a coordination point for GTP. Residues 40–48 (LHPTIEDIY) carry the Effector region motif. Residues 67–71 (DTAGL) and 127–130 (NVRA) contribute to the GTP site.

Belongs to the small GTPase superfamily. Ras family. KappaB-Ras subfamily. In terms of assembly, interacts with NF-kappa-B inhibitor cactus.

Atypical Ras-like protein that may act as a regulator of NF-kappa-B activity, possibly by preventing the degradation of NF-kappa-B inhibitor cactus. The sequence is that of NF-kappa-B inhibitor-interacting Ras-like protein (kappaB-Ras) from Drosophila melanogaster (Fruit fly).